The sequence spans 302 residues: Bifunctional protein FolD (302 aa).

NADP(+) is bound by residues 165-167, Ser-190, and Ile-231; that span reads GRS.

The protein belongs to the tetrahydrofolate dehydrogenase/cyclohydrolase family. As to quaternary structure, homodimer.

The catalysed reaction is (6R)-5,10-methylene-5,6,7,8-tetrahydrofolate + NADP(+) = (6R)-5,10-methenyltetrahydrofolate + NADPH. It catalyses the reaction (6R)-5,10-methenyltetrahydrofolate + H2O = (6R)-10-formyltetrahydrofolate + H(+). The protein operates within one-carbon metabolism; tetrahydrofolate interconversion. Its function is as follows. Catalyzes the oxidation of 5,10-methylenetetrahydrofolate to 5,10-methenyltetrahydrofolate and then the hydrolysis of 5,10-methenyltetrahydrofolate to 10-formyltetrahydrofolate. The polypeptide is Bifunctional protein FolD (Prochlorococcus marinus (strain SARG / CCMP1375 / SS120)).